The following is a 215-amino-acid chain: Glycerol-3-phosphate acyltransferase (215 aa).

The next 6 helical transmembrane spans lie at 3 to 23 (LILLILTAYLLGSIPTGLWIG), 42 to 61 (TNTFRILGLKAGAATLLIDI), 68 to 90 (TLLPVLVGASNISPITIGFFAVL), 110 to 130 (AGVLLGFAPLYLLFLAAVFVL), 134 to 154 (LFSMISLASLTASVVAVISVL), and 162 to 182 (LLPSYDWLLTITIVVLAAIII).

The protein belongs to the PlsY family. Probably interacts with PlsX.

It localises to the cell membrane. It carries out the reaction an acyl phosphate + sn-glycerol 3-phosphate = a 1-acyl-sn-glycero-3-phosphate + phosphate. Its pathway is lipid metabolism; phospholipid metabolism. Functionally, catalyzes the transfer of an acyl group from acyl-phosphate (acyl-PO(4)) to glycerol-3-phosphate (G3P) to form lysophosphatidic acid (LPA). This enzyme utilizes acyl-phosphate as fatty acyl donor, but not acyl-CoA or acyl-ACP. In Streptococcus equi subsp. equi (strain 4047), this protein is Glycerol-3-phosphate acyltransferase.